A 173-amino-acid chain; its full sequence is NADH-ubiquinone oxidoreductase chain 6 (173 aa).

6 helical membrane-spanning segments follow: residues 1–21, 27–47, 48–68, 85–105, 106–126, and 139–159; these read MTYF…AVAS, YGVV…LSLG, VSFV…VVFV, WGVV…LIVG, GSIG…MFSV, and CGVG…FVVL.

This sequence belongs to the complex I subunit 6 family.

The protein resides in the mitochondrion membrane. The enzyme catalyses a ubiquinone + NADH + 5 H(+)(in) = a ubiquinol + NAD(+) + 4 H(+)(out). In terms of biological role, core subunit of the mitochondrial membrane respiratory chain NADH dehydrogenase (Complex I) that is believed to belong to the minimal assembly required for catalysis. Complex I functions in the transfer of electrons from NADH to the respiratory chain. The immediate electron acceptor for the enzyme is believed to be ubiquinone. The protein is NADH-ubiquinone oxidoreductase chain 6 (MT-ND6) of Aethia psittacula (Parakeet auklet).